Here is a 353-residue protein sequence, read N- to C-terminus: MVREKVTVSTRTLQWKCVESKADNKRLYYGRFILSPLMKGQADTIGISMRRALLGEIEGTCITRAKSEKIPHEYSTLVGIQESVHDILMNLKEIVLRSNLYGTCDASICVRGPGYVTAQDIILPPYVEVVDNTQHIASLTEPIELCIGLQIERNRGYLIKTPNNNSKDGSYPIDAVFMPVRNANHSIHSYGNGNDKQEILFLEIWTNGSLTPKEALHEASRNLIDLFIPFLHTEEENLHLANNQHMVPLPPFTFHDKLDKLRKNKKKRALKSIFIDQSELPPRIYNCLKRSNIYTLLDLLNNSQEDLMKIEHFRIKDVKQILGILEKNFSINLGKKPKMGFESLAQLIDSKSG.

An alpha N-terminal domain (alpha-NTD) region spans residues 1–234 (MVREKVTVST…DLFIPFLHTE (234 aa)). Residues 267–353 (KRALKSIFID…LAQLIDSKSG (87 aa)) form an alpha C-terminal domain (alpha-CTD) region.

Belongs to the RNA polymerase alpha chain family. As to quaternary structure, in plastids the minimal PEP RNA polymerase catalytic core is composed of four subunits: alpha, beta, beta', and beta''. When a (nuclear-encoded) sigma factor is associated with the core the holoenzyme is formed, which can initiate transcription.

Its subcellular location is the plastid. It is found in the chloroplast. The catalysed reaction is RNA(n) + a ribonucleoside 5'-triphosphate = RNA(n+1) + diphosphate. DNA-dependent RNA polymerase catalyzes the transcription of DNA into RNA using the four ribonucleoside triphosphates as substrates. In Daucus carota (Wild carrot), this protein is DNA-directed RNA polymerase subunit alpha.